The primary structure comprises 252 residues: Type II secretion system protein N (252 aa).

Over 1–4 (MKNR) the chain is Cytoplasmic. A helical membrane pass occupies residues 5 to 25 (LTIGLLLAAIYLFWLLLSAPA). Residues 26–252 (RLLALTLSDD…QGEWLSEEKK (227 aa)) are Periplasmic-facing.

Belongs to the GSP N family.

Its subcellular location is the cell inner membrane. Its function is as follows. Involved in a type II secretion system (T2SS, formerly general secretion pathway, GSP) for the export of proteins. Required for the translocation of pullulanase. The chain is Type II secretion system protein N (pulN) from Klebsiella pneumoniae.